The chain runs to 157 residues: Transcription elongation factor GreB (157 aa).

The stretch at 52 to 73 forms a coiled coil; that stretch reads KKLLREIDRRVRYLRKRLEDMR.

This sequence belongs to the GreA/GreB family. GreB subfamily.

Necessary for efficient RNA polymerase transcription elongation past template-encoded arresting sites. The arresting sites in DNA have the property of trapping a certain fraction of elongating RNA polymerases that pass through, resulting in locked ternary complexes. Cleavage of the nascent transcript by cleavage factors such as GreA or GreB allows the resumption of elongation from the new 3'terminus. GreB releases sequences of up to 9 nucleotides in length. This Pseudomonas syringae pv. tomato (strain ATCC BAA-871 / DC3000) protein is Transcription elongation factor GreB.